The sequence spans 129 residues: Photosystem II extrinsic protein V (129 aa).

Heme c contacts are provided by Cys35, Cys38, His39, and His90.

This sequence belongs to the cytochrome c family. PsbV subfamily. As to quaternary structure, PSII is composed of 1 copy each of membrane proteins PsbA, PsbB, PsbC, PsbD, PsbE, PsbF, PsbH, PsbI, PsbJ, PsbK, PsbL, PsbM, PsbT, PsbX, PsbY, PsbZ, Psb30/Ycf12, peripheral proteins PsbO, CyanoQ (PsbQ), PsbU, PsbV and a large number of cofactors. It forms dimeric complexes. Homodimer in crystal structure. Heme c serves as cofactor.

It is found in the cellular thylakoid membrane. In terms of biological role, one of the extrinsic, lumenal subunits of photosystem II (PSII). PSII is a light-driven water plastoquinone oxidoreductase, using light energy to abstract electrons from H(2)O, generating a proton gradient subsequently used for ATP formation. The extrinsic proteins stabilize the structure of photosystem II oxygen-evolving complex (OEC), the ion environment of oxygen evolution and protect the OEC against heat-induced inactivation. Low-potential cytochrome c that plays a role in the OEC of PSII. The sequence is that of Photosystem II extrinsic protein V from Limnospira maxima (Arthrospira maxima).